The sequence spans 343 residues: Probable dual-specificity RNA methyltransferase RlmN (343 aa).

Glu91 (proton acceptor) is an active-site residue. The Radical SAM core domain maps to 97 to 326 (HPDRITACIS…AEIRREKGSD (230 aa)). The cysteines at positions 104 and 331 are disulfide-linked. [4Fe-4S] cluster-binding residues include Cys111, Cys115, and Cys118. Residues 158-159 (GE), Ser190, 213-215 (SLH), and Asn289 contribute to the S-adenosyl-L-methionine site. Catalysis depends on Cys331, which acts as the S-methylcysteine intermediate.

Belongs to the radical SAM superfamily. RlmN family. [4Fe-4S] cluster serves as cofactor.

Its subcellular location is the cytoplasm. It carries out the reaction adenosine(2503) in 23S rRNA + 2 reduced [2Fe-2S]-[ferredoxin] + 2 S-adenosyl-L-methionine = 2-methyladenosine(2503) in 23S rRNA + 5'-deoxyadenosine + L-methionine + 2 oxidized [2Fe-2S]-[ferredoxin] + S-adenosyl-L-homocysteine. The enzyme catalyses adenosine(37) in tRNA + 2 reduced [2Fe-2S]-[ferredoxin] + 2 S-adenosyl-L-methionine = 2-methyladenosine(37) in tRNA + 5'-deoxyadenosine + L-methionine + 2 oxidized [2Fe-2S]-[ferredoxin] + S-adenosyl-L-homocysteine. Functionally, specifically methylates position 2 of adenine 2503 in 23S rRNA and position 2 of adenine 37 in tRNAs. The chain is Probable dual-specificity RNA methyltransferase RlmN from Thermotoga sp. (strain RQ2).